The chain runs to 483 residues: MSKLQDRHGGEAAADVGRRARHQRLLLSFPVFPIVLLLLAPCTIFFFTSGDVPLPRIRIEYARRDAPTITAVAADTSPPPPSPPSSSPPPLSFPPPPPPPSSPPPPALPVVDDHSDTQRSLRRLRQLTDSPYTLGPAVTGYDARRAEWLRDHTEFPASVGRGRPRVLMVTGSAPRRCKDPEGDHLLLRALKNKVDYCRVHGFDIFYSNTVLDAEMSGFWTKLPLLRALMLAHPETELLWWVDSDVVFTDMLFEPPWGRYRRHNLVIHGWDGAVYGAKTWLGLNAGSFIIRNCQWSLDLLDAWAPMGPPGPVRDMYGKIFAETLTNRPPYEADDQSALVFLLVTQRHRWGAKVFLENSYNLHGFWADIVDRYEEMRRQWRHPGLGDDRWPLITHFVGCKPCGGDDASYDGERCRRGMDRAFNFADDQILELYGFAHESLDTMAVRRVRNDTGRPLDADNQELGRLLHPTFKARKKKTSRAARPM.

The Cytoplasmic segment spans residues 1-26; sequence MSKLQDRHGGEAAADVGRRARHQRLL. The chain crosses the membrane as a helical; Signal-anchor for type II membrane protein span at residues 27 to 47; that stretch reads LSFPVFPIVLLLLAPCTIFFF. Residues 48–483 are Lumenal-facing; that stretch reads TSGDVPLPRI…KKTSRAARPM (436 aa). The tract at residues 71–119 is disordered; sequence AVAADTSPPPPSPPSSSPPPLSFPPPPPPPSSPPPPALPVVDDHSDTQR. The span at 77 to 108 shows a compositional bias: pro residues; sequence SPPPPSPPSSSPPPLSFPPPPPPPSSPPPPAL. A glycan (N-linked (GlcNAc...) asparagine) is linked at N448.

It belongs to the glycosyltransferase 34 family.

The protein localises to the golgi apparatus membrane. Its function is as follows. Probable glycosyltransferase that may be involved in the biosynthesis of xyloglucan. The chain is Probable glycosyltransferase 4 from Oryza sativa subsp. indica (Rice).